The sequence spans 864 residues: Probable LRR receptor-like serine/threonine-protein kinase At1g07550 (864 aa).

Positions 1 to 23 (MDTCTRLLFAACATLSILHLVQS) are cleaved as a signal peptide. Residues 24 to 507 (QNQQGFISLD…SCGTRFPTAA (484 aa)) are Extracellular-facing. N-linked (GlcNAc...) asparagine glycans are attached at residues Asn-49, Asn-229, Asn-256, Asn-289, Asn-432, Asn-445, and Asn-464. LRR repeat units follow at residues 411–434 (RIVKLDLSSSGLNGVIPPSIQNLT), 435–457 (QLQELDLSQNNLTGKVPEFLAKM), and 459–480 (YLLVINLSGNKLSGLVPQALLD). Residues 508-528 (VAASVSAVAIIILVLVLIFVL) traverse the membrane as a helical segment. At 529–864 (RRRKPSAGKV…VDTEINPKAR (336 aa)) the chain is on the cytoplasmic side. Thr-551 is subject to Phosphothreonine. In terms of domain architecture, Protein kinase spans 560–831 (NNFQVVIGKG…QVVHVLNECL (272 aa)). Residues 566-574 (IGKGGFGVV) and Lys-587 each bind ATP. Residue Tyr-632 is modified to Phosphotyrosine. The active-site Proton acceptor is Asp-684. 2 positions are modified to phosphothreonine: Thr-718 and Thr-723. Position 731 is a phosphotyrosine (Tyr-731).

It belongs to the protein kinase superfamily. Ser/Thr protein kinase family.

The protein localises to the membrane. The catalysed reaction is L-seryl-[protein] + ATP = O-phospho-L-seryl-[protein] + ADP + H(+). The enzyme catalyses L-threonyl-[protein] + ATP = O-phospho-L-threonyl-[protein] + ADP + H(+). This Arabidopsis thaliana (Mouse-ear cress) protein is Probable LRR receptor-like serine/threonine-protein kinase At1g07550.